The sequence spans 303 residues: N-acetyl-D-glucosamine kinase (303 aa).

ATP is bound by residues 4–11 (GFDIGGTK) and 133–140 (GVGGGLIF). Positions 157, 177, 179, and 184 each coordinate Zn(2+).

The protein belongs to the ROK (NagC/XylR) family. NagK subfamily.

The catalysed reaction is N-acetyl-D-glucosamine + ATP = N-acetyl-D-glucosamine 6-phosphate + ADP + H(+). The protein operates within cell wall biogenesis; peptidoglycan recycling. Its function is as follows. Catalyzes the phosphorylation of N-acetyl-D-glucosamine (GlcNAc) derived from cell-wall degradation, yielding GlcNAc-6-P. This is N-acetyl-D-glucosamine kinase from Escherichia coli O7:K1 (strain IAI39 / ExPEC).